A 200-amino-acid polypeptide reads, in one-letter code: Dephospho-CoA kinase (200 aa).

Residues 4 to 200 form the DPCK domain; the sequence is VIGLTGGIAS…AILKKWNIID (197 aa). Position 12–17 (12–17) interacts with ATP; the sequence is ASGKST.

The protein belongs to the CoaE family.

The protein resides in the cytoplasm. It catalyses the reaction 3'-dephospho-CoA + ATP = ADP + CoA + H(+). It functions in the pathway cofactor biosynthesis; coenzyme A biosynthesis; CoA from (R)-pantothenate: step 5/5. In terms of biological role, catalyzes the phosphorylation of the 3'-hydroxyl group of dephosphocoenzyme A to form coenzyme A. The chain is Dephospho-CoA kinase from Bacillus cereus (strain ZK / E33L).